Here is a 586-residue protein sequence, read N- to C-terminus: Protein NRT1/ PTR FAMILY 5.3 (586 aa).

Helical transmembrane passes span 77–97, 100–120, 141–161, 189–209, 217–237, 334–354, 370–390, 408–428, 449–469, 492–512, and 538–558; these read WVGT…AHFG, ITFV…TLSV, ASVI…IGTG, FFNW…TVLV, WAIG…IFLL, PVLF…TLFI, IPPA…IVIY, ITLL…MIIA, AVPI…MGLA, LGTS…SILL, and NYYM…LVVI.

Belongs to the major facilitator superfamily. Proton-dependent oligopeptide transporter (POT/PTR) (TC 2.A.17) family. Expressed in roots and siliques.

Its subcellular location is the membrane. Peptide transporter. This Arabidopsis thaliana (Mouse-ear cress) protein is Protein NRT1/ PTR FAMILY 5.3 (NPF5.3).